Consider the following 474-residue polypeptide: Light-independent protochlorophyllide reductase subunit N (474 aa).

[4Fe-4S] cluster contacts are provided by cysteine 22, cysteine 47, and cysteine 107.

Belongs to the BchN/ChlN family. In terms of assembly, protochlorophyllide reductase is composed of three subunits; ChlL, ChlN and ChlB. Forms a heterotetramer of two ChlB and two ChlN subunits. It depends on [4Fe-4S] cluster as a cofactor.

It localises to the plastid. The protein localises to the chloroplast. It catalyses the reaction chlorophyllide a + oxidized 2[4Fe-4S]-[ferredoxin] + 2 ADP + 2 phosphate = protochlorophyllide a + reduced 2[4Fe-4S]-[ferredoxin] + 2 ATP + 2 H2O. The protein operates within porphyrin-containing compound metabolism; chlorophyll biosynthesis (light-independent). In terms of biological role, component of the dark-operative protochlorophyllide reductase (DPOR) that uses Mg-ATP and reduced ferredoxin to reduce ring D of protochlorophyllide (Pchlide) to form chlorophyllide a (Chlide). This reaction is light-independent. The NB-protein (ChlN-ChlB) is the catalytic component of the complex. The sequence is that of Light-independent protochlorophyllide reductase subunit N from Physcomitrium patens (Spreading-leaved earth moss).